Reading from the N-terminus, the 384-residue chain is Mitogen-activated protein kinase 8 (384 aa).

The Protein kinase domain occupies tyrosine 26–isoleucine 321. ATP-binding positions include isoleucine 32–valine 40 and lysine 55. At cysteine 116 the chain carries S-nitrosocysteine. The active-site Proton acceptor is aspartate 151. Threonine 183 carries the post-translational modification Phosphothreonine; by MAP2K7. The TXY signature appears at threonine 183–tyrosine 185. Tyrosine 185 carries the phosphotyrosine; by MAP2K4 modification. Position 377 is a phosphoserine (serine 377).

Belongs to the protein kinase superfamily. CMGC Ser/Thr protein kinase family. MAP kinase subfamily. Binds to at least four scaffolding proteins, MAPK8IP1/JIP-1, MAPK8IP2/JIP-2, MAPK8IP3/JIP-3/JSAP1 and SPAG9/MAPK8IP4/JIP-4. These proteins also bind other components of the JNK signaling pathway. Forms a complex with MAPK8IP1 and ARHGEF28. Interacts with TP53 and WWOX. Interacts with JAMP. Interacts with NFATC4. Interacts with MECOM; regulates JNK signaling. Interacts with PIN1; this interaction mediates MAPK8 conformational changes leading to the binding of MAPK8 to its substrates. Interacts with HSF1 (via D domain and preferentially with hyperphosphorylated form); this interaction occurs under both normal growth conditions and immediately upon heat shock. Interacts (phosphorylated form) with NFE2; the interaction phosphorylates NFE2 in undifferentiated cells. Interacts with GRIPAP1. Interacts with POU5F1; phosphorylates POU5F1 at 'Ser-347'. Found in a complex with SH3RF1, RAC1, MAP3K11/MLK3, MAP2K7/MKK7 and MAPK8IP1/JIP1. Found in a complex with SH3RF1, RAC2, MAP3K7/TAK1, MAP2K7/MKK7, MAPK8IP1/JIP1 and MAPK9/JNK2. Requires Mg(2+) as cofactor. Phosphorylated by TAOK2. Dually phosphorylated on Thr-183 and Tyr-185 by MAP2K7 and MAP2K4, which activates the enzyme. May be phosphorylated at Thr-183 and Tyr-185 by MAP3K1/MEKK1. Phosphorylated form is more concentrated at synapses than none-phosphorylated. Brain (at protein level).

Its subcellular location is the cytoplasm. The protein localises to the nucleus. The protein resides in the synapse. It catalyses the reaction L-seryl-[protein] + ATP = O-phospho-L-seryl-[protein] + ADP + H(+). It carries out the reaction L-threonyl-[protein] + ATP = O-phospho-L-threonyl-[protein] + ADP + H(+). Inhibited by SERPINB3. Activated by threonine and tyrosine phosphorylation by either of two dual specificity kinases, MAP2K4 and MAP2K7. MAP2K4 shows a strong preference for Tyr-185 while MAP2K7 phosphorylates Tyr-183 preferentially. Inhibited by dual specificity phosphatases, such as DUSP1. Functionally, serine/threonine-protein kinase involved in various processes such as cell proliferation, differentiation, migration, transformation and programmed cell death. Extracellular stimuli such as pro-inflammatory cytokines or physical stress stimulate the stress-activated protein kinase/c-Jun N-terminal kinase (SAP/JNK) signaling pathway. In this cascade, two dual specificity kinases MAP2K4/MKK4 and MAP2K7/MKK7 phosphorylate and activate MAPK8/JNK1. In turn, MAPK8/JNK1 phosphorylates a number of transcription factors, primarily components of AP-1 such as JUN, JDP2 and ATF2 and thus regulates AP-1 transcriptional activity. Phosphorylates the replication licensing factor CDT1, inhibiting the interaction between CDT1 and the histone H4 acetylase HBO1 to replication origins. Loss of this interaction abrogates the acetylation required for replication initiation. Promotes stressed cell apoptosis by phosphorylating key regulatory factors including p53/TP53 and Yes-associates protein YAP1. In T-cells, MAPK8 and MAPK9 are required for polarized differentiation of T-helper cells into Th1 cells. Contributes to the survival of erythroid cells by phosphorylating the antagonist of cell death BAD upon EPO stimulation. Mediates starvation-induced BCL2 phosphorylation, BCL2 dissociation from BECN1, and thus activation of autophagy. Phosphorylates STMN2 and hence regulates microtubule dynamics, controlling neurite elongation in cortical neurons. In the developing brain, through its cytoplasmic activity on STMN2, negatively regulates the rate of exit from multipolar stage and of radial migration from the ventricular zone. Phosphorylates several other substrates including heat shock factor protein 4 (HSF4), the deacetylase SIRT1, ELK1, or the E3 ligase ITCH. Phosphorylates the CLOCK-BMAL1 heterodimer and plays a role in the regulation of the circadian clock. Phosphorylates the heat shock transcription factor HSF1, suppressing HSF1-induced transcriptional activity. Phosphorylates POU5F1, which results in the inhibition of POU5F1's transcriptional activity and enhances its proteasomal degradation. Phosphorylates JUND and this phosphorylation is inhibited in the presence of MEN1. In neurons, phosphorylates SYT4 which captures neuronal dense core vesicles at synapses. Phosphorylates EIF4ENIF1/4-ET in response to oxidative stress, promoting P-body assembly. Phosphorylates SIRT6 in response to oxidative stress, stimulating its mono-ADP-ribosyltransferase activity. Phosphorylates NLRP3, promoting assembly of the NLRP3 inflammasome. Phosphorylates ALKBH5 in response to reactive oxygen species (ROS), promoting ALKBH5 sumoylation and inactivation. In Mus musculus (Mouse), this protein is Mitogen-activated protein kinase 8 (Mapk8).